The sequence spans 825 residues: Leucine-rich repeat and guanylate kinase domain-containing protein (825 aa).

Residues 73–96 (DSDGDEDQGEGEAGSEESSESEML) form a disordered region. 9 LRR repeats span residues 129-149 (YLNL…CGYV), 150-171 (HLQK…SCMP), 172-193 (YLLE…KPPK), 194-215 (NLKK…SAYH), 216-237 (ALTK…EMCN), 238-259 (NLIH…NKLP), 260-280 (IKIL…EDLK), 281-302 (ALQN…ENHD), and 303-324 (LLEV…EYIK). The region spanning 337–375 (NPIQEKSEYWFFVIFMLLRLTELDQKKIKVEEKVSAVNK) is the LRRCT domain. The 184-residue stretch at 414–597 (YPMLILAGPE…AYQKLSQLIR (184 aa)) folds into the Guanylate kinase-like domain. An ATP-binding site is contributed by 421–428 (GPEACGKR). Residues 760-825 (PEGSISSHLG…TLPPIPQGRR (66 aa)) are disordered. Over residues 763–774 (SISSHLGSGASD) the composition is skewed to polar residues. Residues 816–825 (TLPPIPQGRR) show a composition bias toward pro residues.

Interacts (via guanylate kinase-like domain) with RIMBP3 (via coiled-coil region). Interacts (via guanylate kinase-like domain) with HOOK2. Interacts (via LRRCT domain) with KLC3. Interacts with HOOK1 and HOOK3.

It localises to the cytoplasmic vesicle. Its subcellular location is the secretory vesicle. The protein localises to the acrosome. It is found in the cytoplasm. The protein resides in the cytoskeleton. It localises to the cilium basal body. Involved in multiple aspects of sperm assembly including acrosome attachment, shaping of the sperm head and in the early aspects of axoneme development. Not essential for primary cilium biogenesis. This Homo sapiens (Human) protein is Leucine-rich repeat and guanylate kinase domain-containing protein (LRGUK).